Consider the following 355-residue polypeptide: Heavy metal-associated isoprenylated plant protein 7 (355 aa).

Positions 1–58 (MGEEEKKPEAAEEKKMEEKKPEEKKEGEDKKVDAEKKGEDSDKKPQEGESNKDSKEDS) are enriched in basic and acidic residues. Residues 1-74 (MGEEEKKPEA…APAPPPPPQE (74 aa)) form a disordered region. Residues 63-73 (PEAPAPPPPPQ) show a composition bias toward pro residues. 2 consecutive HMA domains span residues 72–136 (PQEV…HRQV) and 170–234 (VVTV…KHAA). The a metal cation site is built by Cys83 and Cys86. A disordered region spans residues 132–157 (THRQVQLLSPIPPPPPPPEKKAEEDK). Positions 181 and 184 each coordinate a metal cation. The segment at 235-308 (IMKIDPPPPP…GGGEEEGKVV (74 aa)) is disordered. Over residues 254-293 (EGEKKEEEKGEGESKGEEGKDDKAKTDEEKKEGDGGKGEG) the composition is skewed to basic and acidic residues. Cysteine methyl ester is present on Cys352. A lipid anchor (S-farnesyl cysteine) is attached at Cys352. Residues 353–355 (TVM) constitute a propeptide, removed in mature form.

Belongs to the HIPP family. In terms of processing, efficiently farnesylated in vitro.

Functionally, heavy-metal-binding protein. Binds zinc, copper and nickel in a reversible manner. This Arabidopsis thaliana (Mouse-ear cress) protein is Heavy metal-associated isoprenylated plant protein 7.